The primary structure comprises 738 residues: Pentatricopeptide repeat-containing protein At5g65570 (738 aa).

PPR repeat units lie at residues 98 to 128 (AEIS…MSER), 129 to 163 (HIVT…NVLP), 164 to 198 (DEYT…GLEV), 200 to 230 (NVFV…VEEK), 231 to 265 (DVVL…KVQP), 266 to 300 (NEYT…GFES), 301 to 331 (ALAS…IEYP), 332 to 366 (NQVS…SIKP), 367 to 401 (NSFT…GFDR), 402 to 432 (DKYA…LSEV), 433 to 467 (DVIS…GLQP), 468 to 502 (NDVT…KIML), and 503 to 537 (TNDH…DLVL). The tract at residues 537-612 (LWRTLLSACK…NPAMSWVEIN (76 aa)) is type E motif. A type E(+) motif region spans residues 613–644 (KETHTFMAGDLFSHPNSEQILENLEELIKKSK). A type DYW motif region spans residues 645-738 (DLGYVEDKSC…DGSCSCGDYW (94 aa)).

This sequence belongs to the PPR family. PCMP-H subfamily.

The chain is Pentatricopeptide repeat-containing protein At5g65570 (PCMP-H47) from Arabidopsis thaliana (Mouse-ear cress).